The following is a 465-amino-acid chain: Cysteine--tRNA ligase (465 aa).

Residue Cys30 coordinates Zn(2+). The short motif at 32–42 is the 'HIGH' region element; the sequence is ITVYDYCHIGH. Zn(2+)-binding residues include Cys214, His239, and Glu243. A 'KMSKS' region motif is present at residues 271–275; it reads KMSKS. An ATP-binding site is contributed by Lys274.

This sequence belongs to the class-I aminoacyl-tRNA synthetase family. As to quaternary structure, monomer. Requires Zn(2+) as cofactor.

The protein resides in the cytoplasm. It catalyses the reaction tRNA(Cys) + L-cysteine + ATP = L-cysteinyl-tRNA(Cys) + AMP + diphosphate. The sequence is that of Cysteine--tRNA ligase from Burkholderia mallei (strain NCTC 10229).